A 283-amino-acid polypeptide reads, in one-letter code: Bifunctional protein FolD 2 (283 aa).

NADP(+) contacts are provided by residues 165–167 (GRG), threonine 192, and valine 233.

It belongs to the tetrahydrofolate dehydrogenase/cyclohydrolase family. As to quaternary structure, homodimer.

It carries out the reaction (6R)-5,10-methylene-5,6,7,8-tetrahydrofolate + NADP(+) = (6R)-5,10-methenyltetrahydrofolate + NADPH. The enzyme catalyses (6R)-5,10-methenyltetrahydrofolate + H2O = (6R)-10-formyltetrahydrofolate + H(+). It functions in the pathway one-carbon metabolism; tetrahydrofolate interconversion. Its function is as follows. Catalyzes the oxidation of 5,10-methylenetetrahydrofolate to 5,10-methenyltetrahydrofolate and then the hydrolysis of 5,10-methenyltetrahydrofolate to 10-formyltetrahydrofolate. This chain is Bifunctional protein FolD 2, found in Saccharopolyspora erythraea (strain ATCC 11635 / DSM 40517 / JCM 4748 / NBRC 13426 / NCIMB 8594 / NRRL 2338).